The sequence spans 121 residues: NADH-quinone oxidoreductase subunit A (121 aa).

The next 3 helical transmembrane spans lie at tyrosine 8–glycine 28, leucine 65–isoleucine 85, and glutamine 93–isoleucine 113.

It belongs to the complex I subunit 3 family. As to quaternary structure, NDH-1 is composed of 14 different subunits. Subunits NuoA, H, J, K, L, M, N constitute the membrane sector of the complex.

The protein localises to the cell inner membrane. It catalyses the reaction a quinone + NADH + 5 H(+)(in) = a quinol + NAD(+) + 4 H(+)(out). Functionally, NDH-1 shuttles electrons from NADH, via FMN and iron-sulfur (Fe-S) centers, to quinones in the respiratory chain. The immediate electron acceptor for the enzyme in this species is believed to be a menaquinone. Couples the redox reaction to proton translocation (for every two electrons transferred, four hydrogen ions are translocated across the cytoplasmic membrane), and thus conserves the redox energy in a proton gradient. In Flavobacterium psychrophilum (strain ATCC 49511 / DSM 21280 / CIP 103535 / JIP02/86), this protein is NADH-quinone oxidoreductase subunit A.